The primary structure comprises 564 residues: Proline--tRNA ligase (564 aa).

Belongs to the class-II aminoacyl-tRNA synthetase family. ProS type 1 subfamily. In terms of assembly, homodimer.

It localises to the cytoplasm. It catalyses the reaction tRNA(Pro) + L-proline + ATP = L-prolyl-tRNA(Pro) + AMP + diphosphate. Its function is as follows. Catalyzes the attachment of proline to tRNA(Pro) in a two-step reaction: proline is first activated by ATP to form Pro-AMP and then transferred to the acceptor end of tRNA(Pro). As ProRS can inadvertently accommodate and process non-cognate amino acids such as alanine and cysteine, to avoid such errors it has two additional distinct editing activities against alanine. One activity is designated as 'pretransfer' editing and involves the tRNA(Pro)-independent hydrolysis of activated Ala-AMP. The other activity is designated 'posttransfer' editing and involves deacylation of mischarged Ala-tRNA(Pro). The misacylated Cys-tRNA(Pro) is not edited by ProRS. The polypeptide is Proline--tRNA ligase (Thermosipho melanesiensis (strain DSM 12029 / CIP 104789 / BI429)).